The following is a 189-amino-acid chain: uncharacterized protein (189 aa).

The HTH tetR-type domain occupies 9–69 (ADTGGRILRA…SMLTSHIADV (61 aa)). Residues 32–51 (TLAEIARRAGVSRPTVYRRW) constitute a DNA-binding region (H-T-H motif).

This is an uncharacterized protein from Mycobacterium tuberculosis (strain CDC 1551 / Oshkosh).